The following is a 584-amino-acid chain: POTE ankyrin domain family member D (584 aa).

ANK repeat units lie at residues 172-201 (EKRT…QLNV), 205-234 (KKRT…DRNI), 238-267 (YGNT…DIES), 271-300 (CGLT…NLNV), 304-333 (YGRT…DVSS), and 337-366 (SGQT…KQML). Positions 369-502 (SSENSNPEQD…ILTNKQKQIE (134 aa)) are disordered. 3 stretches are compositionally biased toward basic and acidic residues: residues 377-392 (QDLK…RLKV), 401-412 (MSQEPEINKDCD), and 466-481 (EEYH…KQLS). Positions 482–498 (EEQNTGISQDEILTNKQ) are enriched in polar residues. The stretch at 494–583 (LTNKQKQIEV…LNEEALTKTN (90 aa)) forms a coiled coil.

The protein belongs to the POTE family. Expressed in prostate, ovary, testis, placenta and prostate cancer cell lines. Localizes to basal and terminal prostate epithelial cells.

It localises to the cell membrane. This Homo sapiens (Human) protein is POTE ankyrin domain family member D (POTED).